A 360-amino-acid polypeptide reads, in one-letter code: Inward rectifier potassium channel 13 (360 aa).

Over 1–50 (MDSRNCKVNAPLLSQRYRRMVTKDGHSTLQMDGAQRGLVYLRDAWGILMD) the chain is Cytoplasmic. Residues 51-77 (MRWRWMMLVFSASFVVHWLVFAVLWYA) traverse the membrane as a helical segment. Over 78–105 (VAEMNGDLEIDHDVPPENHTICVKHITS) the chain is Extracellular. An intramembrane region (helical; Pore-forming) is located at residues 106-122 (FTAAFSFSLETQLTIGY). The Selectivity filter signature appears at 119 to 124 (TIGYGT). Residues 123-131 (GTMFPSGDC) lie on the Extracellular side of the membrane. Residues 132–157 (PSAIALLAIQMLLGLMLEAFITGAFV) form a helical membrane-spanning segment. The Cytoplasmic portion of the chain corresponds to 158–360 (AKIARPKNRA…FQIAETGLTE (203 aa)). The residue at position 201 (S201) is a Phosphoserine; by PKC. S287 is modified (phosphoserine; by PKA).

This sequence belongs to the inward rectifier-type potassium channel (TC 1.A.2.1) family. KCNJ13 subfamily. Homotetramer. Interacts with RAB28; the interaction may facilitate cone outer segments phagocytosis. Post-translationally, phosphorylation at Ser-201 by PKC strongly inhibits ionic currents, while phosphorylation at Ser-287 by PKA increases them.

The protein localises to the membrane. It is found in the cell membrane. It catalyses the reaction K(+)(in) = K(+)(out). Its activity is regulated as follows. Inhibited by Ba(2+) and Cs(+), although sensitivity to those inhibitors is much lower than in other Kir channels. Inward rectifier potassium channels are characterized by a greater tendency to allow potassium to flow into the cell rather than out of it. Their voltage dependence is regulated by the concentration of extracellular potassium; as external potassium is raised, the voltage range of the channel opening shifts to more positive voltages. The inward rectification is mainly due to the blockage of outward current by internal magnesium. KCNJ13 has a very low single channel conductance, low sensitivity to block by external barium and cesium, and no dependence of its inward rectification properties on the internal blocking particle magnesium. The chain is Inward rectifier potassium channel 13 (Kcnj13) from Rattus norvegicus (Rat).